Here is a 165-residue protein sequence, read N- to C-terminus: UPF0179 protein Igni_1272 (165 aa).

Belongs to the UPF0179 family.

This is UPF0179 protein Igni_1272 from Ignicoccus hospitalis (strain KIN4/I / DSM 18386 / JCM 14125).